Reading from the N-terminus, the 1133-residue chain is MAYPELDAADFLQQLARRKEFKSLISPPVDQKELIRDLRAHFVQIGGPGCEKGGRAFFPCDPYASPFPSIKGLQLHNAQLFVQNFQNPNTPYSRLLLNWQTGTGKSIAAIAIARQFMNHYMNFIENAPWIFVVGFTRAIIQTEMLRRPELGFVSYKEVAELHRLLHIAKQSGSTTSVESRHLNGFVSTLKRRLTDRNRGGFFQFYGYKEFASKLFNITSKGEEKNFDVLSLFHRSDEAEDTLNENDISQFVQKISEAETNGLIRVNQKIMEQLRGGLLIADEIHNVYNIQERNNYGIALQYVLDAFPPHQAPRAVFMSATPVTGSVMEYVDLLNLLVPRHELPNGQPLQRQQLFDSSGHSVKWKKDALALVERLSTGRVSFLLDTNTNFYPERIFAGKMLSYKDEKLPYLHFIECPMSEYQLETLKQLGPDPKISSNAYSIYDMVFPNPKFSKQTEPKAYGLFNSTETPTALSMASTDWLLENGVQIIEPSRRAPFNVSGSFLSLQPPTHISGLAFYSGKYTQMMKDILSIIRQGRGKILIYHNRVRMSGVLILQEILQSNGILNEVSSPVGTTRCSICAAIRDDHTHSDHQFIPVRFTILHSEIEPAVRERSLALFNASSNLEGHQLRILIGSKVIVEGLNFQAVRYEMIMSLPLDIPRLIQVFGRVVRKNSHMELPPSERNVTIYLYVSTTPDGGPELAKYAQKLKEYILIQEGDKALRKHAIDGFTNQIKIDKPMLESLPLSPSITPANVGATVLNTFEAYGYGEQEVKTISNIIISLFMARPVWTYSELWKAVSTPKLIQGITIDNKLFSEDNFALALISLCYSKNQCKELWIQNRLCTIMHVPAKPEHLYVAAVLNHKKEPVLDIETYIRDFQPPTMHSIRITKYLEHSQTKEPFQVLYEKFQKDFQDEPMEQVLIHYPASFHYTMLEALIIDNLAGMGALVEVYKKFFIAFSKKDIQPFPDIFKIISHVPGDDNTLVGYATEDSVRLITSREDKTWHEIPLYMLNINVKRKENDIVIGYMESKGKALKFKIRPPIQVLKKNEITDIRMLNRGAVCETRGREEQQKIANQLGISLNLTKISAIKLCLLIRNNLLQKEMEARNQPNGMQDGIRWFYLFNDKMPSLVHTS.

The Helicase ATP-binding domain maps to 52–352 (KGGRAFFPCD…PNGQPLQRQQ (301 aa)). 99–106 (WQTGTGKS) provides a ligand contact to ATP. A DEAH box motif is present at residues 281–284 (DEIH). The Helicase C-terminal domain occupies 524-724 (MMKDILSIIR…EGDKALRKHA (201 aa)).

Belongs to the DEAD box helicase family. DEAH subfamily.

The protein localises to the virion. The catalysed reaction is ATP + H2O = ADP + phosphate + H(+). Its function is as follows. Putative initation factor. The protein is Early transcription factor large subunit homolog of African swine fever virus (isolate Tick/South Africa/Pretoriuskop Pr4/1996) (ASFV).